Consider the following 226-residue polypeptide: NifU-like protein 1, chloroplastic (226 aa).

Residues 1 to 76 (MQTTTVPMAA…PVTAVQLPLT (76 aa)) constitute a chloroplast transit peptide.

It belongs to the NifU family. Homodimer; disulfide-linked.

The protein localises to the plastid. Its subcellular location is the chloroplast stroma. Molecular scaffold for [Fe-S] cluster assembly of chloroplastic iron-sulfur proteins. This Oryza sativa subsp. japonica (Rice) protein is NifU-like protein 1, chloroplastic (NIFU1).